A 115-amino-acid chain; its full sequence is Probable non-functional T cell receptor beta variable 23-1 (115 aa).

Positions 1–21 are cleaved as a signal peptide; it reads MGTRLLGCAALCLLAADSFHA. The region spanning 22-115 is the Ig-like domain; sequence KVTQTPGHLV…TALYLCASSQ (94 aa). Cysteines 42 and 111 form a disulfide.

In terms of assembly, alpha-beta TR is a heterodimer composed of an alpha and beta chain; disulfide-linked. The alpha-beta TR is associated with the transmembrane signaling CD3 coreceptor proteins to form the TR-CD3 (TcR or TCR). The assembly of alpha-beta TR heterodimers with CD3 occurs in the endoplasmic reticulum where a single alpha-beta TR heterodimer associates with one CD3D-CD3E heterodimer, one CD3G-CD3E heterodimer and one CD247 homodimer forming a stable octameric structure. CD3D-CD3E and CD3G-CD3E heterodimers preferentially associate with TR alpha and TR beta chains, respectively. The association of the CD247 homodimer is the last step of TcR assembly in the endoplasmic reticulum and is required for transport to the cell surface.

It is found in the cell membrane. Functionally, probable non-functional open reading frame (ORF) of V region of the variable domain of T cell receptor (TR) beta chain. Non-functional ORF generally cannot participate in the synthesis of a productive T cell receptor (TR) chain due to altered V-(D)-J or switch recombination and/or splicing site (at mRNA level) and/or conserved amino acid change (protein level). Alpha-beta T cell receptors are antigen specific receptors which are essential to the immune response and are present on the cell surface of T lymphocytes. Recognize peptide-major histocompatibility (MH) (pMH) complexes that are displayed by antigen presenting cells (APC), a prerequisite for efficient T cell adaptive immunity against pathogens. Binding of alpha-beta TR to pMH complex initiates TR-CD3 clustering on the cell surface and intracellular activation of LCK that phosphorylates the ITAM motifs of CD3G, CD3D, CD3E and CD247 enabling the recruitment of ZAP70. In turn ZAP70 phosphorylates LAT, which recruits numerous signaling molecules to form the LAT signalosome. The LAT signalosome propagates signal branching to three major signaling pathways, the calcium, the mitogen-activated protein kinase (MAPK) kinase and the nuclear factor NF-kappa-B (NF-kB) pathways, leading to the mobilization of transcription factors that are critical for gene expression and essential for T cell growth and differentiation. The T cell repertoire is generated in the thymus, by V-(D)-J rearrangement. This repertoire is then shaped by intrathymic selection events to generate a peripheral T cell pool of self-MH restricted, non-autoaggressive T cells. Post-thymic interaction of alpha-beta TR with the pMH complexes shapes TR structural and functional avidity. The sequence is that of Probable non-functional T cell receptor beta variable 23-1 from Homo sapiens (Human).